The following is a 420-amino-acid chain: Dynein axonemal assembly factor 4 (420 aa).

Residues 3-87 (LQVSDYSWQQ…KEAAMWETLS (85 aa)) enclose the CS domain. The tract at residues 7–103 (DYSWQQTKTA…ETMQRIREKS (97 aa)) is mediates interaction with ESR1 and STUB1. TPR repeat units lie at residues 290-323 (PEWL…NNKM), 324-357 (PLLY…LMPP), and 366-399 (MKAH…DPSN).

In terms of assembly, interacts with ZMYND10. Interacts with STUB1. Interacts with ESR1 and ESR2. Interacts with DNAAF2. Interacts with CCT3, CCT4, CCT5 and CCT8. Interacts with DNAAF6/PIH1D3.

It localises to the nucleus. Its subcellular location is the cytoplasm. The protein localises to the cell projection. The protein resides in the neuron projection. It is found in the dynein axonemal particle. In terms of biological role, involved in neuronal migration during development of the cerebral neocortex. May regulate the stability and proteasomal degradation of the estrogen receptors that play an important role in neuronal differentiation, survival and plasticity. Axonemal dynein assembly factor required for ciliary motility. The sequence is that of Dynein axonemal assembly factor 4 from Pongo pygmaeus (Bornean orangutan).